The primary structure comprises 379 residues: Dual-specificity RNA methyltransferase RlmN (379 aa).

Residue Glu95 is the Proton acceptor of the active site. In terms of domain architecture, Radical SAM core spans 101 to 345 (EETRGTLCVS…TTVRKTRGDD (245 aa)). The cysteines at positions 108 and 350 are disulfide-linked. Positions 115, 119, and 122 each coordinate [4Fe-4S] cluster. Residues 176–177 (GE), Ser208, 230–232 (SLH), and Asn307 each bind S-adenosyl-L-methionine. The active-site S-methylcysteine intermediate is the Cys350.

It belongs to the radical SAM superfamily. RlmN family. It depends on [4Fe-4S] cluster as a cofactor.

It localises to the cytoplasm. It catalyses the reaction adenosine(2503) in 23S rRNA + 2 reduced [2Fe-2S]-[ferredoxin] + 2 S-adenosyl-L-methionine = 2-methyladenosine(2503) in 23S rRNA + 5'-deoxyadenosine + L-methionine + 2 oxidized [2Fe-2S]-[ferredoxin] + S-adenosyl-L-homocysteine. The catalysed reaction is adenosine(37) in tRNA + 2 reduced [2Fe-2S]-[ferredoxin] + 2 S-adenosyl-L-methionine = 2-methyladenosine(37) in tRNA + 5'-deoxyadenosine + L-methionine + 2 oxidized [2Fe-2S]-[ferredoxin] + S-adenosyl-L-homocysteine. In terms of biological role, specifically methylates position 2 of adenine 2503 in 23S rRNA and position 2 of adenine 37 in tRNAs. m2A2503 modification seems to play a crucial role in the proofreading step occurring at the peptidyl transferase center and thus would serve to optimize ribosomal fidelity. The sequence is that of Dual-specificity RNA methyltransferase RlmN from Burkholderia cenocepacia (strain ATCC BAA-245 / DSM 16553 / LMG 16656 / NCTC 13227 / J2315 / CF5610) (Burkholderia cepacia (strain J2315)).